A 96-amino-acid polypeptide reads, in one-letter code: Colicin-K immunity protein (96 aa).

The chain crosses the membrane as a helical span at residues 73–93 (ALFYLLMAIPVGLPSFIYYTL).

It localises to the cell membrane. This protein is able to protect a cell, which harbors the plasmid ColK encoding colicin K, against colicin K. In Escherichia coli, this protein is Colicin-K immunity protein (cki).